We begin with the raw amino-acid sequence, 727 residues long: MNKGWLELESDPGLFTLLVEDFGVKGVQVEEIYDLQSKCQGPVYGFIFLFKWIEERRSRRKVSTLVDDTSVIDDDIVNSMFFAHQLIPNSCATHALLSVLLNCSNVDLGPTLSRMKDFTKGFSPESKGYAIGNAPELAKAHNSHARPEPRHLPEKQNGLSAVRTMEAFHFVSYVPITGRLFELDGLKVYPIDHGPWGEDEEWTDKARRVIMERIGLATAGEPYHDIRFNLMAVVPDRRVKYEARLHVLKGNRQTVLEALQQLIRVTQPELIQTHKSQESQLPEESKPASSKSPFGLEAGRTPAASECTHTDGAEEVAGSCPQTTTHSPPSKSKLVVKPSGSSLNGVPPTPTPIVQRLPAFLDNHNYAKSPMQEEEDLAAGVGRSRVPVRPQQYSDDEEDYEDEEEDVQNTSSAIRYKRKGTGKPGSLSNSSDGQLSVLQPNTINVLTEKLQESQKDLSIPLSIKTSSGAGSPAVAVPTHSQPSPTPSNESTDTASEIGSAFNSPLRSPIRSANPTRPSSPVTSHISKVLFGEDDSLLRVDCIRYNRAVRDLGPVISTGLLHLAEDGVLSPLALTEGGKGSSPSTRSSQGSQGSSSLEEKEVVEVTDSRDKSGLNRSSEPLSGEKYSPKELLALLKCVEAEIANYEACLKEEVEKRKKFKIDDQRRTHNYDEFICTFISMLAQEGMLANLVEQNISVRRRQGVSIGRLHKQRKPDRRKRSRPYKAKRQ.

Positions 4-235 (GWLELESDPG…IRFNLMAVVP (232 aa)) constitute a UCH catalytic domain. Residues 56–60 (RRSRR) carry the Arg-finger motif motif. Residue Cys-91 is the Nucleophile of the active site. The Proton donor role is filled by His-169. Residues 273 to 351 (THKSQESQLP…SLNGVPPTPT (79 aa)) are disordered. Residue Ser-292 is modified to Phosphoserine. Residues 320 to 330 (CPQTTTHSPPS) are compositionally biased toward polar residues. The HBM-like motif signature appears at 363–366 (NHNY). A phosphoserine mark is found at Ser-369 and Ser-394. Disordered stretches follow at residues 372 to 435 (QEEE…DGQL) and 462 to 522 (SIKT…SPVT). Over residues 394-407 (SDDEEDYEDEEEDV) the composition is skewed to acidic residues. 2 stretches are compositionally biased toward polar residues: residues 426–435 (SLSNSSDGQL) and 478–522 (THSQ…SPVT). Thr-491 bears the Phosphothreonine mark. Phosphoserine occurs at positions 519, 535, 583, and 595. The tract at residues 573-622 (LTEGGKGSSPSTRSSQGSQGSSSLEEKEVVEVTDSRDKSGLNRSSEPLSG) is disordered. Over residues 580–595 (SSPSTRSSQGSQGSSS) the composition is skewed to low complexity. The segment at 594 to 719 (SSLEEKEVVE…QRKPDRRKRS (126 aa)) is interaction with BRCA1. Residues 596-612 (LEEKEVVEVTDSRDKSG) are compositionally biased toward basic and acidic residues. Residues 628-659 (KELLALLKCVEAEIANYEACLKEEVEKRKKFK) are a coiled coil. The interaction with YY1 stretch occupies residues 640–684 (EIANYEACLKEEVEKRKKFKIDDQRRTHNYDEFICTFISMLAQEG). One can recognise a ULD domain in the interval 668 to 696 (NYDEFICTFISMLAQEGMLANLVEQNISV). The interaction with nucleosomal DNA forming a DNA clamp with ASXL1 stretch occupies residues 697–699 (RRR). A Classical bipartite Nuclear localization signal (NLS) motif is present at residues 697–720 (RRRQGVSIGRLHKQRKPDRRKRSR). The interval 702–727 (VSIGRLHKQRKPDRRKRSRPYKAKRQ) is disordered. The positively charged C-terminal extension (CTE) stretch occupies residues 711 to 727 (RKPDRRKRSRPYKAKRQ). The Nuclear localization signal motif lies at 715-720 (RRKRSR). A Non-classical PY-nuclear localization signal (PY-NLS) motif is present at residues 715–722 (RRKRSRPY).

The protein belongs to the peptidase C12 family. BAP1 subfamily. Core component of the polycomb repressive deubiquitinase (PR-DUB) complex, at least composed of BAP1, one of ASXL1, ASXL2 or (probably) ASXL3, and one of MBD5 or MBD6. The PR-DUB core associates with a number of accessory proteins, including FOXK1, FOXK2, KDM1B, HCFC1, YY1 and OGT; KDM1B specifically associates with ASXL2 PR-DUB complexes. The BAP1 deubiquitinase activity is not required for PR-DUB assembly. Homodimerize (via coiled-coil hinge-region between the UCH and ULD domains) to mediate assembly of 2 copies of the BAP1-ASXL heterodimer into a bisymmetric tetramer; dimerization enhances association with nucleosomes. The PR-DUB complex associates with nucleosomes to mediate deubiquitination of 'lys-120' of histone H2AK118ub1 substrates; the association requires the positively charged C-terminal tail of BAP1. Interacts (via ULD domain) with ASXL1 (via DEUBAD domain); the interaction is direct and forms a ubiquitin binding cleft. The interaction with ASXL1 stabilizes BAP1 but is not required for nucleosome binding. Associates (via C-terminus) with nucleosome and chromatosome complexes through direct interaction with DNA and the histone3/4 dimer; this association displaces the histone-2A C-terminal tail, extending and orienting the H2AK118ub1 substrate towards the BAP1 deubiquitinase active site. Also interacts (via arginine finger) directly with the histone H2A-H2B acidic patch; this interaction is not critical for nucleosome-chromatosome association but may play a role in orienting the H2AK118ub1 substrate towards the PR-DUB complex active site. Interacts with BRCA1 (via the RING finger). Interacts (via HBM-like motif) with HCFC1. Interacts (via a C-terminal region overlapping the ULD domain) with YY1; the interaction is direct and requires the interaction with HCFC1. Interacts (when phosphorylated at Thr-491) with FOXK1. Interacts (when phosphorylated at Thr-491) with FOXK2; leading to recruitment of the PR-DUB complex and repression of FOXK2 target genes. Interacts (via non-classical PY-NLS) with TNPO1/transportin-1 (via HEAT repeats 8-12); the interaction is direct, mediates BAP1 nuclear localization and disrupts BAP1 homodimerization. Interacts (via C-terminus) with KPNA1/importin alpha5 and KPNA2/importin alpha1; these interactions can contribute to BAP1 nuclear localization but are less important than the interaction with TNPO1/transportin-1. The interaction with TNPO1/transportin-1 disrupts homodimerization and blocks ubiquitination by UBE2O. Post-translationally, ubiquitinated: monoubiquitinated at multiple sites within its nuclear localization signal (NLS) BY UBE2O, leading to cytoplasmic retention. Able to mediate autodeubiquitination via intramolecular interactions to counteract cytoplasmic retention. Monoubiquitinated on at least 4 sites near or within its PY-NLS.

It is found in the cytoplasm. The protein localises to the nucleus. It localises to the chromosome. The enzyme catalyses Thiol-dependent hydrolysis of ester, thioester, amide, peptide and isopeptide bonds formed by the C-terminal Gly of ubiquitin (a 76-residue protein attached to proteins as an intracellular targeting signal).. Its function is as follows. Deubiquitinating enzyme that plays a key role in chromatin by mediating deubiquitination of histone H2A and HCFC1. Catalytic component of the polycomb repressive deubiquitinase (PR-DUB) complex, a complex that specifically mediates deubiquitination of histone H2A monoubiquitinated at 'Lys-120' (H2AK119ub1). Does not deubiquitinate monoubiquitinated histone H2B. The PR-DUB complex is an epigenetic regulator of gene expression and acts as a transcriptional coactivator, affecting genes involved in development, cell communication, signaling, cell proliferation and cell viability. Antagonizes PRC1 mediated H2AK119ub1 monoubiquitination. As part of the PR-DUB complex, associates with chromatin enriched in histone marks H3K4me1, H3K4me3, and H3K27Ac, but not in H3K27me3. Acts as a regulator of cell growth by mediating deubiquitination of HCFC1 N-terminal and C-terminal chains, with some specificity toward 'Lys-48'-linked polyubiquitin chains compared to 'Lys-63'-linked polyubiquitin chains. Deubiquitination of HCFC1 does not lead to increase stability of HCFC1. Interferes with the BRCA1 and BARD1 heterodimer activity by inhibiting their ability to mediate ubiquitination and autoubiquitination. It however does not mediate deubiquitination of BRCA1 and BARD1. Able to mediate autodeubiquitination via intramolecular interactions to counteract monoubiquitination at the nuclear localization signal (NLS), thereby protecting it from cytoplasmic sequestration. Acts as a tumor suppressor. Negatively regulates epithelial-mesenchymal transition (EMT) of trophoblast stem cells during placental development by regulating genes involved in epithelial cell integrity, cell adhesion and cytoskeletal organization. This chain is Ubiquitin carboxyl-terminal hydrolase BAP1 (Bap1), found in Rattus norvegicus (Rat).